The sequence spans 531 residues: Tryptophan 6-halogenase ThaL (531 aa).

Positions 13, 15, 16, 39, 42, 45, 47, and 50 each coordinate FAD. K79 is an active-site residue. P111 is an L-tryptophan binding site. FAD contacts are provided by M198 and L349. Chloride contacts are provided by S360 and G361. Residue I362 coordinates FAD. Residues Y454, Y455, E461, and F465 each contribute to the L-tryptophan site.

Belongs to the flavin-dependent halogenase family. Bacterial tryptophan halogenase subfamily. In terms of assembly, homodimer. Monomer in solution.

The enzyme catalyses L-tryptophan + FADH2 + chloride + O2 = 6-chloro-L-tryptophan + FAD + 2 H2O. It carries out the reaction D-tryptophan + FADH2 + chloride + O2 = 6-chloro-D-tryptophan + FAD + 2 H2O. In terms of biological role, involved in the biosynthesis of thienodolin, a plant growth-regulating compound. Catalyzes the chlorination of tryptophan (Trp) at C6 position to yield 6-chloro-tryptophan. It is also able to use bromide ions to generate monobrominated Trp. In vitro, accepts a wide range of amides and peptides carrying either L- or D-Trp at the N-terminus. In Streptomyces albogriseolus, this protein is Tryptophan 6-halogenase ThaL.